Here is a 284-residue protein sequence, read N- to C-terminus: D-tagatose-1,6-bisphosphate aldolase subunit GatY (284 aa).

Asp-82 (proton donor) is an active-site residue. His-83 and His-180 together coordinate Zn(2+). A dihydroxyacetone phosphate-binding site is contributed by Gly-181. Zn(2+) is bound at residue His-208. Residues 209 to 211 and 230 to 233 contribute to the dihydroxyacetone phosphate site; these read GAS and NVAT.

The protein belongs to the class II fructose-bisphosphate aldolase family. TagBP aldolase GatY subfamily. Forms a complex with GatZ. Zn(2+) serves as cofactor.

It carries out the reaction D-tagatofuranose 1,6-bisphosphate = D-glyceraldehyde 3-phosphate + dihydroxyacetone phosphate. The protein operates within carbohydrate metabolism; D-tagatose 6-phosphate degradation; D-glyceraldehyde 3-phosphate and glycerone phosphate from D-tagatose 6-phosphate: step 2/2. Its function is as follows. Catalytic subunit of the tagatose-1,6-bisphosphate aldolase GatYZ, which catalyzes the reversible aldol condensation of dihydroxyacetone phosphate (DHAP or glycerone-phosphate) with glyceraldehyde 3-phosphate (G3P) to produce tagatose 1,6-bisphosphate (TBP). Requires GatZ subunit for full activity and stability. Is involved in the catabolism of galactitol. This Salmonella paratyphi B (strain ATCC BAA-1250 / SPB7) protein is D-tagatose-1,6-bisphosphate aldolase subunit GatY.